A 246-amino-acid polypeptide reads, in one-letter code: Polyhedrin (246 aa).

Belongs to the polyhedrin family.

In terms of biological role, major component of the virus occlusion bodies, which are large proteinaceous structures (polyhedra), that protect the virus from the outside environment for extended periods until they are ingested by insect larvae. The chain is Polyhedrin (PH) from Mamestra brassicae nuclear polyhedrosis virus (MbNPV).